Consider the following 319-residue polypeptide: Probable enoyl-CoA hydratase alpha subunit (319 aa).

Residues 199–298 (FEAAKQRRLV…EIGMPVVLDW (100 aa)) are DUF35.

It belongs to the thioester dehydratase family. Heterodimer composed of ChsH1 and ChsH2. Two heterodimers combine to form a heterotetramer. The complex interacts with Ltp2 via the DUF35 C-terminal region of ChsH2.

In terms of biological role, probably involved in bile acid degradation. The chain is Probable enoyl-CoA hydratase alpha subunit from Thermomonospora curvata (strain ATCC 19995 / DSM 43183 / JCM 3096 / KCTC 9072 / NBRC 15933 / NCIMB 10081 / Henssen B9).